The sequence spans 824 residues: Probable acyl-CoA dehydrogenase IBR3 (824 aa).

N-acetylglycine is present on Gly2. Residues 555 to 565, 589 to 591, Arg706, Gln776, and 776 to 780 contribute to the FAD site; these read FAMTEPQVASS, WTS, and QVHGA. The Microbody targeting signal signature appears at 822 to 824; the sequence is SKL.

The protein belongs to the acyl-CoA dehydrogenase family. It depends on FAD as a cofactor.

It localises to the peroxisome. It carries out the reaction a 2,3-saturated acyl-CoA + A = a 2,3-dehydroacyl-CoA + AH2. Its function is as follows. Involved with IBR1 and IBR10 in the peroxisomal beta-oxidation of indole-3-butyric acid (IBA) to form indole-3-acetic acid (IAA), a biologically active auxin. May be responsible for catalyzing the first step in IBA-CoA beta-oxidation. May play a role in defense response to pathogenic bacteria. This is Probable acyl-CoA dehydrogenase IBR3 from Arabidopsis thaliana (Mouse-ear cress).